Reading from the N-terminus, the 354-residue chain is Rhodopsin (354 aa).

Residues 1-36 lie on the Extracellular side of the membrane; sequence MNGTEGPYFYIPMVNTTGIVRSPYDYPQYYLVNPAA. Residues N2 and N15 are each glycosylated (N-linked (GlcNAc...) asparagine). Residues 37–61 form a helical membrane-spanning segment; that stretch reads YAALGAYMFFLILVGFPINFLTLYV. The Cytoplasmic portion of the chain corresponds to 62-73; it reads TIEHKKLRTPLN. The chain crosses the membrane as a helical span at residues 74–96; that stretch reads YILLNLAVANLFMVFGGFTTTMY. The Extracellular segment spans residues 97 to 110; that stretch reads TSMHGYFVLGRLGC. An intrachain disulfide couples C110 to C187. The chain crosses the membrane as a helical span at residues 111–133; it reads NLEGFFATLGGEIALWSLVVLAV. The 'Ionic lock' involved in activated form stabilization signature appears at 134–136; sequence ERW. Residues 134–152 lie on the Cytoplasmic side of the membrane; that stretch reads ERWMVVCKPISNFRFGENH. Residues 153–173 form a helical membrane-spanning segment; it reads AIMGLAMTWLMASACAVPPLV. Residues 174–202 lie on the Extracellular side of the membrane; the sequence is GWSRYIPEGMQCSCGVDYYTRAEGFNNES. A glycan (N-linked (GlcNAc...) asparagine) is linked at N200. Residues 203–224 form a helical membrane-spanning segment; the sequence is FVVYMFCCHFMIPLIIVFFCYG. The Cytoplasmic segment spans residues 225–252; the sequence is RLLCAVKEAAAAQQESETTQRAEREVTR. A helical membrane pass occupies residues 253 to 274; it reads MVVIMVIAFLVCWLPYASVAWW. At 275-286 the chain is on the extracellular side; the sequence is IFTHQGSEFGPV. A helical membrane pass occupies residues 287–308; that stretch reads FMTIPAFFAKSSSIYNPMIYIC. N6-(retinylidene)lysine is present on K296. Topologically, residues 309–354 are cytoplasmic; that stretch reads MNKQFRNCMITTLCCGKNPFEEEEGASSTASKTEASSVSSSSVSPA. 2 S-palmitoyl cysteine lipidation sites follow: C322 and C323. The segment at 329–354 is disordered; that stretch reads EEEEGASSTASKTEASSVSSSSVSPA. The span at 334–354 shows a compositional bias: low complexity; that stretch reads ASSTASKTEASSVSSSSVSPA.

This sequence belongs to the G-protein coupled receptor 1 family. Opsin subfamily. Post-translationally, phosphorylated on some or all of the serine and threonine residues present in the C-terminal region. Contains one covalently linked retinal chromophore.

Its subcellular location is the membrane. The protein localises to the cell projection. The protein resides in the cilium. It is found in the photoreceptor outer segment. Its function is as follows. Photoreceptor required for image-forming vision at low light intensity. While most salt water fish species use retinal as chromophore, most freshwater fish use 3-dehydroretinal, or a mixture of retinal and 3-dehydroretinal. Light-induced isomerization of 11-cis to all-trans retinal triggers a conformational change that activates signaling via G-proteins. Subsequent receptor phosphorylation mediates displacement of the bound G-protein alpha subunit by arrestin and terminates signaling. The polypeptide is Rhodopsin (rho) (Mullus surmuletus (Striped red mullet)).